The primary structure comprises 410 residues: MKPAYPPLLLQMSPAYTPRPLKNLFTANQCWAHLLEEGGLRDIEVETVTKMLACGTSILGVKHYTCGNHSCPHVKYLCNTCHCRACPSCGKKATDQWITVQNNRLPDCPWQHLVFTLPDTLWPLFFYNRWLLDALFRLAADNLIYAAKRRGLRVGIFGALHTYGRRLNWHPHVHLSVTAGGLDEQGVWKNLSFHKEALRRRWMWLVRDYLLGQPLSQLTMPPPLAHILCESDWRRLILAAGGQHWHIHLSKKTKNGRKTVNYLGRYLKKPPISGSRLAHYTNGATLRFTYLDHRTQAYQQETLSQADMLFRVVQHIPEKHFRMIRYFGFLANRVCGQYLPKVYEALKMATPGPTPKLYFAPMAKAFLNVDPFRCVLCGARMVYTAAISGLTVQGLNLNAQAIAQMRYVKP.

It belongs to the transposase 32 family.

Functionally, involved in the transposition of the insertion sequence. The protein is Transposase for insertion sequence element IS801 of Pseudomonas savastanoi pv. phaseolicola (Pseudomonas syringae pv. phaseolicola).